The chain runs to 459 residues: WD repeat-containing protein 41 (459 aa).

6 WD repeats span residues 40–79, 82–128, 131–168, 220–258, 321–359, and 403–441; these read KAHH…KLLE, GHTQ…QVQR, CFQS…LCKT, DHQD…MQAY, AHDS…QLAA, and GHSS…SGLR.

In terms of assembly, component of the C9orf72-SMCR8 complex, at least composed of C9orf72, SMCR8 and WDR41. The complex is formed of two protomers, each individually consisting of one molecule each of C9orf72, SMCR8 and WDR41. The protomers homodimerize via an interaction between C9orf72 (via C-terminus) and SMCR8 (via N-terminus). Within each protomer SMCR8 (via DENN domain) acts as a bridging protein between WDR41 (via C-terminus and N-terminus) and C9orf72 (via C-terminus). The C9orf72-SMCR8 complex associates with the ULK1/ATG1 kinase complex.

The protein localises to the cytoplasm. Non-catalytic component of the C9orf72-SMCR8 complex, a complex that has guanine nucleotide exchange factor (GEF) activity and regulates autophagy. The C9orf72-SMCR8 complex promotes the exchange of GDP to GTP, converting inactive GDP-bound RAB8A and RAB39B into their active GTP-bound form, thereby promoting autophagosome maturation. As part of the C9orf72-SMCR8 complex, stimulates RAB8A and RAB11A GTPase activity in vitro, however WDR42 is shown not be an essential complex component for this function. The C9orf72-SMCR8 complex also acts as a negative regulator of autophagy initiation by interacting with the ULK1/ATG1 kinase complex and inhibiting its protein kinase activity. In Homo sapiens (Human), this protein is WD repeat-containing protein 41.